The sequence spans 447 residues: Cysteine--tRNA ligase (447 aa).

A Zn(2+)-binding site is contributed by Cys28. Residues 30 to 40 (PTVYNYIHIGN) carry the 'HIGH' region motif. Cys211, His236, and Glu240 together coordinate Zn(2+). The short motif at 268-272 (KMSKS) is the 'KMSKS' region element. Residue Lys271 participates in ATP binding.

It belongs to the class-I aminoacyl-tRNA synthetase family. As to quaternary structure, monomer. Zn(2+) is required as a cofactor.

Its subcellular location is the cytoplasm. It catalyses the reaction tRNA(Cys) + L-cysteine + ATP = L-cysteinyl-tRNA(Cys) + AMP + diphosphate. This Streptococcus agalactiae serotype III (strain NEM316) protein is Cysteine--tRNA ligase.